A 68-amino-acid polypeptide reads, in one-letter code: Neuronal regeneration-related protein (68 aa).

The segment at Glu42–Phe68 is disordered.

Interacts with FLNA. Interacts with the latency-associated peptides (LAP) of TGFB1 and TGFB2; the interaction results in a decrease in TGFB autoinduction. Phosphorylated on Ser-59. Phosphorylation decreases stability and activity. Expressed in brain and fetal lung.

The protein resides in the cytoplasm. In terms of biological role, may have roles in cellular differentiation. Ectopic expression induces differentiation of fibroblast into myofibroblast and myofibroblast ameboid migration. Increases retinoic-acid regulation of lipid-droplet biogenesis. May also have neural functions. Promotes axonal regeneration and augments motility of gliomas. Down-regulates the expression of TGFB1 and TGFB2 but not of TGFB3. May play a role in the regulation of alveolar generation. This Mus musculus (Mouse) protein is Neuronal regeneration-related protein (Nrep).